Reading from the N-terminus, the 206-residue chain is uncharacterized protein (206 aa).

The Nudix hydrolase domain maps to 29 to 169; that stretch reads YWHSTFHCWV…DGVFAEGFIV (141 aa). A Nudix box motif is present at residues 69–90; the sequence is AGHIKSGESIEDGVRELKEELG. Residues Glu84 and Glu88 each coordinate Mg(2+).

The protein belongs to the Nudix hydrolase family. Mg(2+) serves as cofactor.

This is an uncharacterized protein from Clostridium acetobutylicum (strain ATCC 824 / DSM 792 / JCM 1419 / IAM 19013 / LMG 5710 / NBRC 13948 / NRRL B-527 / VKM B-1787 / 2291 / W).